We begin with the raw amino-acid sequence, 510 residues long: 2,3-bisphosphoglycerate-independent phosphoglycerate mutase (510 aa).

Mn(2+) contacts are provided by aspartate 14 and serine 64. Serine 64 acts as the Phosphoserine intermediate in catalysis. Residues histidine 125, 155–156 (RD), arginine 187, arginine 193, 259–262 (RADR), and lysine 332 each bind substrate. Residues aspartate 399, histidine 403, aspartate 440, histidine 441, and histidine 459 each coordinate Mn(2+).

Belongs to the BPG-independent phosphoglycerate mutase family. As to quaternary structure, monomer. It depends on Mn(2+) as a cofactor.

It catalyses the reaction (2R)-2-phosphoglycerate = (2R)-3-phosphoglycerate. Its pathway is carbohydrate degradation; glycolysis; pyruvate from D-glyceraldehyde 3-phosphate: step 3/5. Functionally, catalyzes the interconversion of 2-phosphoglycerate and 3-phosphoglycerate. This Ectopseudomonas mendocina (strain ymp) (Pseudomonas mendocina) protein is 2,3-bisphosphoglycerate-independent phosphoglycerate mutase.